The following is a 62-amino-acid chain: Arabinogalactan protein 40 (62 aa).

The first 22 residues, Met1–Ala22, serve as a signal peptide directing secretion. Pro28, Pro30, and Pro32 each carry 4-hydroxyproline. O-linked (Ara...) hydroxyproline glycans are attached at residues Pro28, Pro30, and Pro32. Ser35 carries GPI-anchor amidated serine lipidation. The propeptide at Ser36–Gln62 is removed in mature form.

Belongs to the AG-peptide AGP family. In terms of processing, contains 4-hydroxyproline; hydroxylated on Pro-28, Pro-30 and Pro-32. O-glycosylated on hydroxyprolines; noncontiguous hydroxylproline residues are glycosylated with arabinogalactan.

It localises to the cell membrane. Functionally, proteoglycan that seems to be implicated in diverse developmental roles such as differentiation, cell-cell recognition, embryogenesis and programmed cell death. This Arabidopsis thaliana (Mouse-ear cress) protein is Arabinogalactan protein 40.